The primary structure comprises 223 residues: Ribonuclease T (223 aa).

The Exonuclease domain occupies 20-194 (VVIDVETAGF…YDTERTAELF (175 aa)). Mg(2+) contacts are provided by aspartate 23, glutamate 25, histidine 181, and aspartate 186. Residue histidine 181 is the Proton donor/acceptor of the active site.

This sequence belongs to the RNase T family. As to quaternary structure, homodimer. Requires Mg(2+) as cofactor.

In terms of biological role, trims short 3' overhangs of a variety of RNA species, leaving a one or two nucleotide 3' overhang. Responsible for the end-turnover of tRNA: specifically removes the terminal AMP residue from uncharged tRNA (tRNA-C-C-A). Also appears to be involved in tRNA biosynthesis. In Shewanella baltica (strain OS185), this protein is Ribonuclease T.